Reading from the N-terminus, the 110-residue chain is T cell receptor alpha variable 35 (110 aa).

The signal sequence occupies residues 1–19 (MLLEHLLIILWMQLTWVSG). In terms of domain architecture, Ig-like spans 20–110 (QQLNQSPQSM…DVGIYFCAGQ (91 aa)). Residues Asn40 and Asn93 are each glycosylated (N-linked (GlcNAc...) asparagine). Cys41 and Cys107 are joined by a disulfide.

As to quaternary structure, alpha-beta TR is a heterodimer composed of an alpha and beta chain; disulfide-linked. The alpha-beta TR is associated with the transmembrane signaling CD3 coreceptor proteins to form the TR-CD3 (TcR or TCR). The assembly of alpha-beta TR heterodimers with CD3 occurs in the endoplasmic reticulum where a single alpha-beta TR heterodimer associates with one CD3D-CD3E heterodimer, one CD3G-CD3E heterodimer and one CD247 homodimer forming a stable octameric structure. CD3D-CD3E and CD3G-CD3E heterodimers preferentially associate with TR alpha and TR beta chains, respectively. The association of the CD247 homodimer is the last step of TcR assembly in the endoplasmic reticulum and is required for transport to the cell surface.

The protein localises to the cell membrane. Functionally, v region of the variable domain of T cell receptor (TR) alpha chain that participates in the antigen recognition. Alpha-beta T cell receptors are antigen specific receptors which are essential to the immune response and are present on the cell surface of T lymphocytes. Recognize peptide-major histocompatibility (MH) (pMH) complexes that are displayed by antigen presenting cells (APC), a prerequisite for efficient T cell adaptive immunity against pathogens. Binding of alpha-beta TR to pMH complex initiates TR-CD3 clustering on the cell surface and intracellular activation of LCK that phosphorylates the ITAM motifs of CD3G, CD3D, CD3E and CD247 enabling the recruitment of ZAP70. In turn ZAP70 phosphorylates LAT, which recruits numerous signaling molecules to form the LAT signalosome. The LAT signalosome propagates signal branching to three major signaling pathways, the calcium, the mitogen-activated protein kinase (MAPK) kinase and the nuclear factor NF-kappa-B (NF-kB) pathways, leading to the mobilization of transcription factors that are critical for gene expression and essential for T cell growth and differentiation. The T cell repertoire is generated in the thymus, by V-(D)-J rearrangement. This repertoire is then shaped by intrathymic selection events to generate a peripheral T cell pool of self-MH restricted, non-autoaggressive T cells. Post-thymic interaction of alpha-beta TR with the pMH complexes shapes TR structural and functional avidity. The polypeptide is T cell receptor alpha variable 35 (Homo sapiens (Human)).